We begin with the raw amino-acid sequence, 230 residues long: tRNA (guanine-N(7)-)-methyltransferase (230 aa).

Positions 61, 86, 113, and 136 each coordinate S-adenosyl-L-methionine. The active site involves Asp136. Substrate is bound by residues Lys140, Asp172, and 208-211 (TKYE).

This sequence belongs to the class I-like SAM-binding methyltransferase superfamily. TrmB family.

It catalyses the reaction guanosine(46) in tRNA + S-adenosyl-L-methionine = N(7)-methylguanosine(46) in tRNA + S-adenosyl-L-homocysteine. It functions in the pathway tRNA modification; N(7)-methylguanine-tRNA biosynthesis. Functionally, catalyzes the formation of N(7)-methylguanine at position 46 (m7G46) in tRNA. The protein is tRNA (guanine-N(7)-)-methyltransferase of Mycobacterium leprae (strain Br4923).